The primary structure comprises 296 residues: tRNA uridine(34) hydroxylase (296 aa).

Residues 130–225 (RGEDVVFFDG…YGEAYGDRGL (96 aa)) enclose the Rhodanese domain. Residue Cys-185 is the Cysteine persulfide intermediate of the active site.

Belongs to the TrhO family.

It catalyses the reaction uridine(34) in tRNA + AH2 + O2 = 5-hydroxyuridine(34) in tRNA + A + H2O. Catalyzes oxygen-dependent 5-hydroxyuridine (ho5U) modification at position 34 in tRNAs. This Kocuria rhizophila (strain ATCC 9341 / DSM 348 / NBRC 103217 / DC2201) protein is tRNA uridine(34) hydroxylase.